Reading from the N-terminus, the 255-residue chain is Homeobox protein Hox-D4 (255 aa).

Residues 31–128 are disordered; it reads EQGADYYGGG…KQPPPGTALK (98 aa). Pro residues predominate over residues 94–109; the sequence is EPCPAPPAPPPAPLPG. Residues 133–138 carry the Antp-type hexapeptide motif; sequence VYPWMK. Positions 154–213 form a DNA-binding region, homeobox; the sequence is PKRSRTAYTRQQVLELEKEFHFNRYLTRRRRIEIAHTLCLSERQIKIWFQNRRMKWKKDH. The disordered stretch occupies residues 212-255; that stretch reads DHKLPNTKGRSSSSSSSSSCSSSVAPSQHLQPMAKDHHTDLTTL. Positions 222–234 are enriched in low complexity; that stretch reads SSSSSSSSSCSSS. Over residues 245-255 the composition is skewed to basic and acidic residues; sequence AKDHHTDLTTL.

The protein belongs to the Antp homeobox family. Deformed subfamily. Forms a DNA-binding heterodimer with transcription factor PBX1.

The protein localises to the nucleus. Sequence-specific transcription factor which is part of a developmental regulatory system that provides cells with specific positional identities on the anterior-posterior axis. The chain is Homeobox protein Hox-D4 (HOXD4) from Gorilla gorilla gorilla (Western lowland gorilla).